Reading from the N-terminus, the 147-residue chain is Deoxyuridine 5'-triphosphate nucleotidohydrolase (147 aa).

Substrate contacts are provided by residues 67–69, N80, and 84–86; these read RSG and TID.

It belongs to the dUTPase family. It depends on Mg(2+) as a cofactor.

The catalysed reaction is dUTP + H2O = dUMP + diphosphate + H(+). The protein operates within pyrimidine metabolism; dUMP biosynthesis; dUMP from dCTP (dUTP route): step 2/2. Functionally, this enzyme is involved in nucleotide metabolism: it produces dUMP, the immediate precursor of thymidine nucleotides and it decreases the intracellular concentration of dUTP so that uracil cannot be incorporated into DNA. The sequence is that of Deoxyuridine 5'-triphosphate nucleotidohydrolase from Anaeromyxobacter dehalogenans (strain 2CP-1 / ATCC BAA-258).